The primary structure comprises 227 residues: Cytochrome c oxidase subunit 2 (227 aa).

At 1-14 (MAHSFQLGFQDATS) the chain is on the mitochondrial intermembrane side. The chain crosses the membrane as a helical span at residues 15-45 (PIMEELLHFHDHTLMIVFLISSLVLYIITLM). Residues 46–59 (LTTKLTHTSTMDAQ) are Mitochondrial matrix-facing. Residues 60–87 (EVETVWTILPAIILILIALPSLRILYLM) form a helical membrane-spanning segment. At 88–227 (DEINTPSLTV…HFENWSTSMI (140 aa)) the chain is on the mitochondrial intermembrane side. Residues histidine 161, cysteine 196, glutamate 198, cysteine 200, histidine 204, and methionine 207 each coordinate Cu cation. A Mg(2+)-binding site is contributed by glutamate 198.

It belongs to the cytochrome c oxidase subunit 2 family. Component of the cytochrome c oxidase (complex IV, CIV), a multisubunit enzyme composed of 14 subunits. The complex is composed of a catalytic core of 3 subunits MT-CO1, MT-CO2 and MT-CO3, encoded in the mitochondrial DNA, and 11 supernumerary subunits COX4I, COX5A, COX5B, COX6A, COX6B, COX6C, COX7A, COX7B, COX7C, COX8 and NDUFA4, which are encoded in the nuclear genome. The complex exists as a monomer or a dimer and forms supercomplexes (SCs) in the inner mitochondrial membrane with NADH-ubiquinone oxidoreductase (complex I, CI) and ubiquinol-cytochrome c oxidoreductase (cytochrome b-c1 complex, complex III, CIII), resulting in different assemblies (supercomplex SCI(1)III(2)IV(1) and megacomplex MCI(2)III(2)IV(2)). Found in a complex with TMEM177, COA6, COX18, COX20, SCO1 and SCO2. Interacts with TMEM177 in a COX20-dependent manner. Interacts with COX20. Interacts with COX16. Requires Cu cation as cofactor.

The protein resides in the mitochondrion inner membrane. It carries out the reaction 4 Fe(II)-[cytochrome c] + O2 + 8 H(+)(in) = 4 Fe(III)-[cytochrome c] + 2 H2O + 4 H(+)(out). In terms of biological role, component of the cytochrome c oxidase, the last enzyme in the mitochondrial electron transport chain which drives oxidative phosphorylation. The respiratory chain contains 3 multisubunit complexes succinate dehydrogenase (complex II, CII), ubiquinol-cytochrome c oxidoreductase (cytochrome b-c1 complex, complex III, CIII) and cytochrome c oxidase (complex IV, CIV), that cooperate to transfer electrons derived from NADH and succinate to molecular oxygen, creating an electrochemical gradient over the inner membrane that drives transmembrane transport and the ATP synthase. Cytochrome c oxidase is the component of the respiratory chain that catalyzes the reduction of oxygen to water. Electrons originating from reduced cytochrome c in the intermembrane space (IMS) are transferred via the dinuclear copper A center (CU(A)) of subunit 2 and heme A of subunit 1 to the active site in subunit 1, a binuclear center (BNC) formed by heme A3 and copper B (CU(B)). The BNC reduces molecular oxygen to 2 water molecules using 4 electrons from cytochrome c in the IMS and 4 protons from the mitochondrial matrix. In Cephalopachus bancanus (Western tarsier), this protein is Cytochrome c oxidase subunit 2 (MT-CO2).